We begin with the raw amino-acid sequence, 619 residues long: Glucokinase regulatory protein (619 aa).

2 SIS domains span residues 90–283 (VQEV…AESN) and 319–498 (TATS…LRGK). 107-109 (CGT) provides a ligand contact to keto-D-fructose 6-phosphate. Residues 109–110 (TS), Glu153, 179–181 (SCG), and Glu347 contribute to the beta-D-fructose 1-phosphate site. Keto-D-fructose 6-phosphate contacts are provided by residues 179–183 (SCGLS) and Glu347. The segment at 462–464 (ILF) is essential for interaction with GCK. Lys513 contacts keto-D-fructose 6-phosphate. Lys513 is a beta-D-fructose 1-phosphate binding site.

It belongs to the GCKR family. Interacts (fructose 6-phosphate bound form) with gck.

It localises to the nucleus. The protein localises to the cytoplasm. The protein resides in the mitochondrion. In terms of biological role, regulates glucokinase (gck) by forming an inactive complex with this enzyme. The affinity of gckr for gck is modulated by fructose metabolites: gckr with bound fructose 6-phosphate has increased affinity for gck, while gckr with bound fructose 1-phosphate has strongly decreased affinity for gck and does not inhibit gck activity. The protein is Glucokinase regulatory protein of Xenopus laevis (African clawed frog).